A 334-amino-acid chain; its full sequence is Dual specificity mitogen-activated protein kinase kinase 6 (334 aa).

A compositionally biased stretch (basic residues) spans 1–11 (MSQSKGKKRNP). The disordered stretch occupies residues 1–34 (MSQSKGKKRNPGLKIPKEAFEQPQTSSTPPRDLD). The tract at residues 4-19 (SKGKKRNPGLKIPKEA) is d domain. Residues 53–314 (LEPIVELGRG…YPELMQHPFF (262 aa)) enclose the Protein kinase domain. ATP contacts are provided by residues 59–67 (LGRGAYGVV) and Lys82. Asp179 acts as the Proton acceptor in catalysis. At Ser207 the chain carries Phosphoserine; by MAPK3. Phosphothreonine; by MAPK3 is present on Thr211. The interval 311-334 (HPFFTLHESKATDVASFVKSILGD) is DVD domain.

The protein belongs to the protein kinase superfamily. STE Ser/Thr protein kinase family. MAP kinase kinase subfamily. Dimer. Interacts (via its D domain) with its substrates MAPK11, MAPK12, MAPK13 and MAPK14. Interacts (via its DVD domain) with MAP3Ks activators like MAP3K5/ASK1, MAP3K1/MEKK1, MAP3K2/MEKK2, MAP3K3/MEKK3, MAP3K4/MEKK4, MAP3K7/TAK1, MAP3K11/MLK3 and MAP3K17/TAOK2. Interacts with DCTN1. Interacts with EIF2AK2/PKR. Weakly autophosphorylated. Phosphorylated at Ser-207 and Thr-211 by the majority of M3Ks, such as MAP3K5/ASK1, MAP3K1/MEKK1, MAP3K2/MEKK2, MAP3K3/MEKK3, MAP3K4/MEKK4, MAP3K7/TAK1, MAP3K11/MLK3 and MAP3K17/TAOK2. In terms of processing, in response to genotoxic stress, MAP3K-phosphorylated MAP2K6 is ubiquitinated and degraded by the SCF(FBXO31) complex.

The protein localises to the nucleus. It is found in the cytoplasm. Its subcellular location is the cytoskeleton. It carries out the reaction L-seryl-[protein] + ATP = O-phospho-L-seryl-[protein] + ADP + H(+). The catalysed reaction is L-threonyl-[protein] + ATP = O-phospho-L-threonyl-[protein] + ADP + H(+). It catalyses the reaction L-tyrosyl-[protein] + ATP = O-phospho-L-tyrosyl-[protein] + ADP + H(+). With respect to regulation, activated by dual phosphorylation on Ser-207 and Thr-211 in response to a variety of cellular stresses, including UV radiation, osmotic shock, hypoxia, inflammatory cytokines, interferon gamma (IFNG), and less often by growth factors. MAP2K6/MKK6 is activated by the majority of M3Ks, such as MAP3K5/ASK1, MAP3K1/MEKK1, MAP3K2/MEKK2, MAP3K3/MEKK3, MAP3K4/MEKK4, MAP3K7/TAK1, MAP3K11/MLK3 and MAP3K17/TAOK2. Its function is as follows. Dual specificity protein kinase which acts as an essential component of the MAP kinase signal transduction pathway. With MAP3K3/MKK3, catalyzes the concomitant phosphorylation of a threonine and a tyrosine residue in the MAP kinases p38 MAPK11, MAPK12, MAPK13 and MAPK14 and plays an important role in the regulation of cellular responses to cytokines and all kinds of stresses. Especially, MAP2K3/MKK3 and MAP2K6/MKK6 are both essential for the activation of MAPK11 and MAPK13 induced by environmental stress, whereas MAP2K6/MKK6 is the major MAPK11 activator in response to TNF. MAP2K6/MKK6 also phosphorylates and activates PAK6. The p38 MAP kinase signal transduction pathway leads to direct activation of transcription factors. Nuclear targets of p38 MAP kinase include the transcription factors ATF2 and ELK1. Within the p38 MAPK signal transduction pathway, MAP3K6/MKK6 mediates phosphorylation of STAT4 through MAPK14 activation, and is therefore required for STAT4 activation and STAT4-regulated gene expression in response to IL-12 stimulation. The pathway is also crucial for IL-6-induced SOCS3 expression and down-regulation of IL-6-mediated gene induction; and for IFNG-dependent gene transcription. Has a role in osteoclast differentiation through NF-kappa-B transactivation by TNFSF11, and in endochondral ossification and since SOX9 is another likely downstream target of the p38 MAPK pathway. MAP2K6/MKK6 mediates apoptotic cell death in thymocytes. Acts also as a regulator for melanocytes dendricity, through the modulation of Rho family GTPases. The sequence is that of Dual specificity mitogen-activated protein kinase kinase 6 (MAP2K6) from Bos taurus (Bovine).